Consider the following 1418-residue polypeptide: Sterol 3-beta-glucosyltransferase (1418 aa).

Basic and acidic residues predominate over residues 1 to 16; it reads MRPFLDDAKRRVDRKL. 3 disordered regions span residues 1-59, 83-188, and 207-233; these read MRPF…SREG, ARFD…RSAT, and LKAS…ASVS. Positions 18–28 are enriched in polar residues; it reads ASRQSLSTSRL. 2 stretches are compositionally biased toward basic and acidic residues: residues 35–44 and 95–105; these read DRLKDNHDAQ and SEQRPRKESSV. Residues 106 to 115 are compositionally biased toward polar residues; the sequence is RKGTSASANT. Positions 116–126 are enriched in low complexity; the sequence is SSPLDSSQRSS. Basic and acidic residues-rich tracts occupy residues 127-139 and 147-166; these read SRTD…ESGT and TISD…HEPQ. Residues 209 to 219 show a composition bias toward polar residues; the sequence is ASSTERSQPSL. The 40-residue stretch at 249 to 288 folds into the GRAM 1 domain; that stretch reads EKVLVEYACSLLQSILLQGYMYVTEGHICFYAYLPKKSTV. In terms of domain architecture, PH spans 289–387; that stretch reads AIKSGYLYKR…WVKALQKVIF (99 aa). The segment at 462-651 is disordered; the sequence is ISSQHLSPQP…DPTKSFSGAP (190 aa). Polar residues predominate over residues 486 to 497; that stretch reads RWSLTSGTSRVL. Positions 508-519 are enriched in low complexity; it reads ASASTSHTSLAH. Positions 534–575 are enriched in polar residues; it reads SESILNSFEQGTESSAAWQSMTDAAESASQILNRSDVFQSPT. Positions 578–598 are enriched in basic and acidic residues; the sequence is GLDRRPSGGERRGRRNSDETA. Polar residues predominate over residues 599 to 612; that stretch reads RSLSTRANVGTGQQ. The segment covering 615-633 has biased composition (basic and acidic residues); sequence ELGRRMDGDTSGREARDST. Residues 635 to 651 show a composition bias toward polar residues; that stretch reads ESDQYTQDPTKSFSGAP. The region spanning 733–799 is the GRAM 2 domain; the sequence is DRFRAHFALP…RDIENVEKEK (67 aa). UDP-alpha-D-glucose is bound by residues Ser920, Arg921, Asp923, Ala1223, His1225, His1238, Gly1242, Thr1243, Asp1262, and Gln1263. The interval 1339–1418 is disordered; the sequence is SIASSTPFSP…SGPGRKLSGR (80 aa). Residues 1341–1355 are compositionally biased toward low complexity; that stretch reads ASSTPFSPTPSAKTT. Residues 1358–1379 show a composition bias toward acidic residues; that stretch reads QDADDDVEDSEEWTFVGDDTDM. Residues 1380–1391 are compositionally biased toward basic and acidic residues; it reads EMSRRLRDRAIS.

Belongs to the glycosyltransferase 28 family.

It is found in the cytoplasm. The protein localises to the preautophagosomal structure membrane. The enzyme catalyses a sterol + UDP-alpha-D-glucose = a sterol 3-beta-D-glucoside + UDP + H(+). It carries out the reaction ergosterol + UDP-alpha-D-glucose = ergosteryl 3-beta-D-glucoside + UDP + H(+). Sterol glycosyltransferase responsible for the glycosylation of ergosterol to form ergosterol-glucoside. This Neosartorya fischeri (strain ATCC 1020 / DSM 3700 / CBS 544.65 / FGSC A1164 / JCM 1740 / NRRL 181 / WB 181) (Aspergillus fischerianus) protein is Sterol 3-beta-glucosyltransferase.